Here is a 535-residue protein sequence, read N- to C-terminus: Bifunctional purine biosynthesis protein PurH (535 aa).

The MGS-like domain maps to 6–151 (TRLPVRRALI…KNHKDVAIVV (146 aa)).

The protein belongs to the PurH family.

It carries out the reaction (6R)-10-formyltetrahydrofolate + 5-amino-1-(5-phospho-beta-D-ribosyl)imidazole-4-carboxamide = 5-formamido-1-(5-phospho-D-ribosyl)imidazole-4-carboxamide + (6S)-5,6,7,8-tetrahydrofolate. The catalysed reaction is IMP + H2O = 5-formamido-1-(5-phospho-D-ribosyl)imidazole-4-carboxamide. Its pathway is purine metabolism; IMP biosynthesis via de novo pathway; 5-formamido-1-(5-phospho-D-ribosyl)imidazole-4-carboxamide from 5-amino-1-(5-phospho-D-ribosyl)imidazole-4-carboxamide (10-formyl THF route): step 1/1. It participates in purine metabolism; IMP biosynthesis via de novo pathway; IMP from 5-formamido-1-(5-phospho-D-ribosyl)imidazole-4-carboxamide: step 1/1. This is Bifunctional purine biosynthesis protein PurH from Pseudomonas putida (strain ATCC 700007 / DSM 6899 / JCM 31910 / BCRC 17059 / LMG 24140 / F1).